The following is a 166-amino-acid chain: Large ribosomal subunit protein uL10 (166 aa).

It belongs to the universal ribosomal protein uL10 family. Part of the ribosomal stalk of the 50S ribosomal subunit. The N-terminus interacts with L11 and the large rRNA to form the base of the stalk. The C-terminus forms an elongated spine to which L12 dimers bind in a sequential fashion forming a multimeric L10(L12)X complex.

In terms of biological role, forms part of the ribosomal stalk, playing a central role in the interaction of the ribosome with GTP-bound translation factors. The sequence is that of Large ribosomal subunit protein uL10 from Streptococcus sanguinis (strain SK36).